The primary structure comprises 549 residues: CTP synthase (549 aa).

Residues 1 to 272 (MPPKSSTTKH…DAYVVRRMDL (272 aa)) are amidoligase domain. S19 lines the CTP pocket. S19 contacts UTP. ATP is bound by residues 20 to 25 (SLGKGL) and D77. 2 residues coordinate Mg(2+): D77 and E146. CTP is bound by residues 153-155 (DIE), 193-198 (KTKPTQ), and K229. UTP-binding positions include 193–198 (KTKPTQ) and K229. The Glutamine amidotransferase type-1 domain maps to 301–548 (VGKYIDLPDA…VKAAVERKTS (248 aa)). Position 360 (G360) interacts with L-glutamine. C387 acts as the Nucleophile; for glutamine hydrolysis in catalysis. L-glutamine-binding positions include 388-391 (LGLQ), E411, and R473. Catalysis depends on residues H521 and E523.

It belongs to the CTP synthase family. Homotetramer.

It carries out the reaction UTP + L-glutamine + ATP + H2O = CTP + L-glutamate + ADP + phosphate + 2 H(+). It catalyses the reaction L-glutamine + H2O = L-glutamate + NH4(+). The enzyme catalyses UTP + NH4(+) + ATP = CTP + ADP + phosphate + 2 H(+). It functions in the pathway pyrimidine metabolism; CTP biosynthesis via de novo pathway; CTP from UDP: step 2/2. Its activity is regulated as follows. Allosterically activated by GTP, when glutamine is the substrate; GTP has no effect on the reaction when ammonia is the substrate. The allosteric effector GTP functions by stabilizing the protein conformation that binds the tetrahedral intermediate(s) formed during glutamine hydrolysis. Inhibited by the product CTP, via allosteric rather than competitive inhibition. Its function is as follows. Catalyzes the ATP-dependent amination of UTP to CTP with either L-glutamine or ammonia as the source of nitrogen. Regulates intracellular CTP levels through interactions with the four ribonucleotide triphosphates. This Streptomyces coelicolor (strain ATCC BAA-471 / A3(2) / M145) protein is CTP synthase.